We begin with the raw amino-acid sequence, 691 residues long: MAAAGVVSGKIIYEQEGVYIHSSCGKTNDQDGLISGILRVLEKDAEVIVDWRPLDDALDSSSILYARKDSSSVVEWTQAPKERGHRGSEHLNSYEAEWDMVNTVSFKRKPHTNGDAPSHRNGKSKWSFLFSLTDLKSIKQNKEGMGWSYLVFCLKDDVVLPALHFHQGDSKLLIESLEKYVVLCESPQDKRTLLVNCQNKSLSQSFENLLDEPAYGLIQAGLLDRRKLLWAIHHWKKIKKDPYTATMIGFSKVTNYIFDSLRGSDPSTHQRPPSEMADFLSDAIPGLKINQQEEPGFEVITRIDLGERPVVQRREPVSLEEWTKNIDSEGRILNVDNMKQMIFRGGLSHALRKQAWKFLLGYFPWDSTKEERTQLQKQKTDEYFRMKLQWKSISQEQEKRNSRLRDYRSLIEKDVNRTDRTNKFYEGQDNPGLILLHDILMTYCMYDFDLGYVQGMSDLLSPLLYVMENEVDAFWCFASYMDQMHQNFEEQMQGMKTQLIQLSTLLRLLDSGFCSYLESQDSGYLYFCFRWLLIRFKREFSFLDILRLWEVMWTELPCTNFHLLLCCAILESEKQQIMEKHYGFNEILKHINELSMKIDVEDILCKAEAISLQMVKCKELPQAVCEILGLQGSEVTTPDSDVGEDENVVMTPCPTSAFQSNALPTLSASGARNDSPTQIPVSSDVCRLTPA.

Position 2 is an N-acetylalanine (alanine 2). Phosphoserine occurs at positions 23, 70, 205, 213, and 274. Residues 346-556 form the Rab-GAP TBC domain; it reads GLSHALRKQA…RLWEVMWTEL (211 aa). Serine 640 and serine 675 each carry phosphoserine. Threonine 689 is modified (phosphothreonine).

Interacts with non-phosphorylated form of RAB8A; phosphorylation of RAB8A at 'Thr-72' disrupts this interaction. Interacts with ARMC12. In terms of tissue distribution, ubiquitous.

Its subcellular location is the cytoplasm. In terms of biological role, acts as a GTPase activating protein for RAB7A. Does not act on RAB4, RAB5 or RAB6. This Homo sapiens (Human) protein is TBC1 domain family member 15 (TBC1D15).